Reading from the N-terminus, the 215-residue chain is Peroxiredoxin 1 (215 aa).

The region spanning valine 2–valine 158 is the Thioredoxin domain. Cysteine 46 functions as the Cysteine sulfenic acid (-SOH) intermediate in the catalytic mechanism. Position 121 (arginine 121) interacts with substrate.

This sequence belongs to the peroxiredoxin family. Prx6 subfamily. In terms of assembly, homodecamer. Pentamer of dimers that assemble into a ring structure.

Its subcellular location is the cytoplasm. The enzyme catalyses a hydroperoxide + [thioredoxin]-dithiol = an alcohol + [thioredoxin]-disulfide + H2O. Its function is as follows. Thiol-specific peroxidase that catalyzes the reduction of hydrogen peroxide and organic hydroperoxides to water and alcohols, respectively. Plays a role in cell protection against oxidative stress by detoxifying peroxides. The protein is Peroxiredoxin 1 of Sulfurisphaera tokodaii (strain DSM 16993 / JCM 10545 / NBRC 100140 / 7) (Sulfolobus tokodaii).